The chain runs to 479 residues: Glycine betaine methyltransferase (479 aa).

The protein belongs to the trimethylamine methyltransferase family.

It catalyses the reaction Co(I)-[glycine betaine-specific corrinoid protein] + glycine betaine + H(+) = methyl-Co(III)-[glycine betaine-specific corrinoid protein] + N,N-dimethylglycine. Functionally, methyltransferase able to methylate free cob(I)alamin in vitro, using glycine betaine as the methyl donor, yealding methylcobalamin (methylCbl) and dimethylglycine. In vivo, probably carries out the methylation of a corrinoid protein, likely the adjacently encoded DSY3155, with glycine betaine, to then supply methyl groups to tetrahydrofolate (THF) for ultimate conversion to carbon dioxide; oxidation of the methyl group would also provide reducing equivalents for anaerobic respiration. Thus, may function in the pathway that allows anaerobic methylotrophic growth of D.hafniense using glycine betaine. Cannot use quaternary amines such as carnitine and choline as substrates, nor tertiary amines such as dimethylglycine or trimethylamine. This Desulfitobacterium hafniense (strain Y51) protein is Glycine betaine methyltransferase.